A 133-amino-acid chain; its full sequence is Small ribosomal subunit protein uS8 (133 aa).

Belongs to the universal ribosomal protein uS8 family. In terms of assembly, part of the 30S ribosomal subunit. Contacts proteins S5 and S12.

Functionally, one of the primary rRNA binding proteins, it binds directly to 16S rRNA central domain where it helps coordinate assembly of the platform of the 30S subunit. The sequence is that of Small ribosomal subunit protein uS8 from Prochlorococcus marinus (strain AS9601).